Reading from the N-terminus, the 207-residue chain is Pyridoxine/pyridoxamine 5'-phosphate oxidase (207 aa).

FMN contacts are provided by residues R53–K58, Y68–T69, K75, and Q97. Residue K58 participates in substrate binding. Substrate is bound by residues Y115, R119, and S123. Residues Q132–S133 and W177 contribute to the FMN site. Substrate is bound at residue R183–H185. Residue R187 participates in FMN binding.

Belongs to the pyridoxamine 5'-phosphate oxidase family. In terms of assembly, homodimer. The cofactor is FMN.

The enzyme catalyses pyridoxamine 5'-phosphate + O2 + H2O = pyridoxal 5'-phosphate + H2O2 + NH4(+). It carries out the reaction pyridoxine 5'-phosphate + O2 = pyridoxal 5'-phosphate + H2O2. The protein operates within cofactor metabolism; pyridoxal 5'-phosphate salvage; pyridoxal 5'-phosphate from pyridoxamine 5'-phosphate: step 1/1. It functions in the pathway cofactor metabolism; pyridoxal 5'-phosphate salvage; pyridoxal 5'-phosphate from pyridoxine 5'-phosphate: step 1/1. Functionally, catalyzes the oxidation of either pyridoxine 5'-phosphate (PNP) or pyridoxamine 5'-phosphate (PMP) into pyridoxal 5'-phosphate (PLP). The protein is Pyridoxine/pyridoxamine 5'-phosphate oxidase of Bartonella henselae (strain ATCC 49882 / DSM 28221 / CCUG 30454 / Houston 1) (Rochalimaea henselae).